The sequence spans 378 residues: MNIALADDKVWHKGKSYRKGYTTGSCATAAAKVATLMILRQQVIHQVSIVTPSGVTLQLNVEEPLIHGLQASAAIRKDGGDDVDATHGMLIYAQVVLRNDATITISGGTGVGKVTRKGIGLPVGNAAINKTPLQTIEAAVREVLGPERGADITIFAPEGEERAQRTYNGRLGIEGGISIIGTTGIVTPMSEESWKRSLALELEQKRAQGMEKIILVPGNHGERFVREQMQLDSELVVTMSNFVGYMLQEAERLAFRHVVLIGHLGKLIKVAAGIFHTHSHIADGRMETLITHLALLGAPNSLLQAIYACNTTEAAMELIEAQGYQEVYNTIATRICERINQMLRYSPQPFQCDAILFSLDNQPLGSNRPITDIVEALR.

The protein belongs to the CbiD family.

It carries out the reaction Co-precorrin-5B + S-adenosyl-L-methionine = Co-precorrin-6A + S-adenosyl-L-homocysteine. Its pathway is cofactor biosynthesis; adenosylcobalamin biosynthesis; cob(II)yrinate a,c-diamide from sirohydrochlorin (anaerobic route): step 6/10. Functionally, catalyzes the methylation of C-1 in cobalt-precorrin-5B to form cobalt-precorrin-6A. The sequence is that of Cobalt-precorrin-5B C(1)-methyltransferase from Tolumonas auensis (strain DSM 9187 / NBRC 110442 / TA 4).